A 222-amino-acid polypeptide reads, in one-letter code: uncharacterized protein (222 aa).

A run of 7 helical transmembrane segments spans residues 26-46 (YGLL…SQQM), 48-68 (LPYP…FLTV), 75-95 (WGLV…GPIL), 107-127 (VITS…AYVL), 139-159 (FITA…FFQI), 166-186 (ISAG…SAII), and 198-218 (ISLY…FGIA).

It belongs to the BI1 family.

The protein resides in the cell membrane. This is an uncharacterized protein from Pseudomonas aeruginosa (strain ATCC 15692 / DSM 22644 / CIP 104116 / JCM 14847 / LMG 12228 / 1C / PRS 101 / PAO1).